We begin with the raw amino-acid sequence, 226 residues long: Protein AhpA (226 aa).

2 helical membrane-spanning segments follow: residues 12–32 (SMIS…LFGV) and 169–189 (GELI…HYFL).

The protein belongs to the Smp family.

It localises to the cell inner membrane. Functionally, when anaerobically expressed in wild-type E.coli K12 confers a hemolytic phenotype, but not in an sheA mutant. Suggests it affects the expression of the latent E.coli K12 hemolysin sheA under anaerobic conditions. The polypeptide is Protein AhpA (ahpA) (Pasteurella multocida (strain Pm70)).